The chain runs to 232 residues: Large ribosomal subunit protein uL1 (232 aa).

It belongs to the universal ribosomal protein uL1 family. As to quaternary structure, part of the 50S ribosomal subunit.

Binds directly to 23S rRNA. The L1 stalk is quite mobile in the ribosome, and is involved in E site tRNA release. Its function is as follows. Protein L1 is also a translational repressor protein, it controls the translation of the L11 operon by binding to its mRNA. The chain is Large ribosomal subunit protein uL1 from Levilactobacillus brevis (strain ATCC 367 / BCRC 12310 / CIP 105137 / JCM 1170 / LMG 11437 / NCIMB 947 / NCTC 947) (Lactobacillus brevis).